The primary structure comprises 375 residues: Solute carrier family 35 member F2 (375 aa).

Residue Met1 is modified to N-acetylmethionine. Phosphoserine occurs at positions 5, 22, 25, and 28. 10 helical membrane-spanning segments follow: residues 39–59 (ILKTIALGQMLSLCICGTAIT), 73–93 (MLQSFINYCLLFLVYTLMLAF), 108–126 (WWKYTLLGLADVEANYLIV), 136–156 (SVQLLDCFGIPVLMALSWFIL), 165–185 (FIAVFVCLLGVGTMVGADILA), 195–215 (VLIGDILVLLGASLYAVSNVC), 227–247 (EFLGMVGLFGTIISGIQLLIV), 263–283 (LLFVAFALCMFCLYSFMPLVI), 290–310 (SVNLGILTADLYSLFFGLFLF), and 314–334 (FSGLYILSFTVIMVGFILYCS). Ser372 bears the Phosphoserine mark.

This sequence belongs to the SLC35F solute transporter family.

The protein resides in the membrane. Functionally, putative solute transporter. The polypeptide is Solute carrier family 35 member F2 (Slc35f2) (Mus musculus (Mouse)).